The sequence spans 123 residues: Ribosome-binding factor A (123 aa).

This sequence belongs to the RbfA family. As to quaternary structure, monomer. Binds 30S ribosomal subunits, but not 50S ribosomal subunits or 70S ribosomes.

Its subcellular location is the cytoplasm. In terms of biological role, one of several proteins that assist in the late maturation steps of the functional core of the 30S ribosomal subunit. Associates with free 30S ribosomal subunits (but not with 30S subunits that are part of 70S ribosomes or polysomes). Required for efficient processing of 16S rRNA. May interact with the 5'-terminal helix region of 16S rRNA. The sequence is that of Ribosome-binding factor A from Chlamydia trachomatis serovar A (strain ATCC VR-571B / DSM 19440 / HAR-13).